The following is a 74-amino-acid chain: uncharacterized protein (74 aa).

The signal sequence occupies residues Met1 to Ala19.

This is an uncharacterized protein from Mycobacterium tuberculosis (strain ATCC 25618 / H37Rv).